Here is a 276-residue protein sequence, read N- to C-terminus: Proteasome subunit beta type-8 (276 aa).

The interval 1 to 33 (MALLDVCGAPRGQRPESALPVAGSGRRSDPGHY) is disordered. The propeptide at 1 to 72 (MALLDVCGAP…RNVQIEMAHG (72 aa)) is removed in mature form. Aspartate 5 carries the phosphothreonine modification. The active-site Nucleophile is threonine 73.

It belongs to the peptidase T1B family. The 26S proteasome consists of a 20S proteasome core and two 19S regulatory subunits. The 20S proteasome core is composed of 28 subunits that are arranged in four stacked rings, resulting in a barrel-shaped structure. The two end rings are each formed by seven alpha subunits, and the two central rings are each formed by seven beta subunits. The catalytic chamber with the active sites is on the inside of the barrel. Component of the immunoproteasome, where it displaces the equivalent housekeeping subunit PSMB5. Component of the spermatoproteasome, a form of the proteasome specifically found in testis. Directly interacts with POMP. Interacts with TAP1. As to quaternary structure, (Microbial infection) Interacts with HIV-1 TAT protein. In terms of processing, autocleaved. The resulting N-terminal Thr residue of the mature subunit is responsible for the nucleophile proteolytic activity.

Its subcellular location is the cytoplasm. It is found in the nucleus. It catalyses the reaction Cleavage of peptide bonds with very broad specificity.. In terms of biological role, the proteasome is a multicatalytic proteinase complex which is characterized by its ability to cleave peptides with Arg, Phe, Tyr, Leu, and Glu adjacent to the leaving group at neutral or slightly basic pH. The proteasome has an ATP-dependent proteolytic activity. This subunit is involved in antigen processing to generate class I binding peptides. Replacement of PSMB5 by PSMB8 increases the capacity of the immunoproteasome to cleave model peptides after hydrophobic and basic residues. Involved in the generation of spliced peptides resulting from the ligation of two separate proteasomal cleavage products that are not contiguous in the parental protein. Acts as a major component of interferon gamma-induced sensitivity. Plays a key role in apoptosis via the degradation of the apoptotic inhibitor MCL1. May be involved in the inflammatory response pathway. In cancer cells, substitution of isoform 1 (E2) by isoform 2 (E1) results in immunoproteasome deficiency. Required for the differentiation of preadipocytes into adipocytes. The protein is Proteasome subunit beta type-8 (PSMB8) of Homo sapiens (Human).